A 198-amino-acid chain; its full sequence is Glycerol-3-phosphate acyltransferase (198 aa).

5 helical membrane-spanning segments follow: residues L4–I24, S53–F75, P80–F102, L112–V132, and V134–F154.

This sequence belongs to the PlsY family. As to quaternary structure, probably interacts with PlsX.

The protein resides in the cell inner membrane. The enzyme catalyses an acyl phosphate + sn-glycerol 3-phosphate = a 1-acyl-sn-glycero-3-phosphate + phosphate. It functions in the pathway lipid metabolism; phospholipid metabolism. Its function is as follows. Catalyzes the transfer of an acyl group from acyl-phosphate (acyl-PO(4)) to glycerol-3-phosphate (G3P) to form lysophosphatidic acid (LPA). This enzyme utilizes acyl-phosphate as fatty acyl donor, but not acyl-CoA or acyl-ACP. The chain is Glycerol-3-phosphate acyltransferase from Aliivibrio fischeri (strain ATCC 700601 / ES114) (Vibrio fischeri).